The following is a 674-amino-acid chain: Protein phosphatase 1 regulatory subunit 15A (674 aa).

The Cytoplasmic portion of the chain corresponds to 1–21; it reads MAPGQAPHQATPWRDAHPFFL. Positions 1–60 are required for localization in the endoplasmic reticulum; it reads MAPGQAPHQATPWRDAHPFFLLSPVMGLLSRAWSRLRGLGPLEPWLVEAVKGAALVEAGL. The helical intramembrane region spans 22 to 39; the sequence is LSPVMGLLSRAWSRLRGL. Topologically, residues 40-674 are cytoplasmic; the sequence is GPLEPWLVEA…AALDLSGRRG (635 aa). Residues 65–504 form a disordered region; it reads RTPLAIPHTP…AAEDWGEAEP (440 aa). Ser-143 carries the phosphoserine modification. Over residues 162 to 172 the composition is skewed to acidic residues; the sequence is KAEEEGVAEEE. Over residues 206–221 the composition is skewed to polar residues; that stretch reads TSTSALSPGSKPSTWV. Basic and acidic residues predominate over residues 232-241; the sequence is TEDKRTERSK. Residues 246-256 are compositionally biased toward polar residues; sequence TSVSPRSSGSD. Residues 258–281 are compositionally biased toward basic and acidic residues; the sequence is RSWEYRSGEASEEKEEKAHKETGK. Position 262 is a phosphotyrosine (Tyr-262). The span at 282-298 shows a compositional bias: low complexity; sequence GEAAPGPQSSAPAQRPQ. 4 tandem repeats follow at residues 337 to 369, 384 to 417, 427 to 460, and 477 to 510. The tract at residues 337 to 510 is 4 X 34 AA approximate repeats; it reads AFLKAWVYWP…EAEPCPFRVA (174 aa). The interval 337 to 510 is interaction with SMAD7; sequence AFLKAWVYWP…EAEPCPFRVA (174 aa). Over residues 348–373 the composition is skewed to acidic residues; that stretch reads EDTEEEEDEEEDEDSDSGSDEEEGEA. Tyr-391 carries the phosphotyrosine modification. Residues 395-415 are compositionally biased toward acidic residues; that stretch reads EDTEEEEDEDSDTGSAEDERE. Residues 418–427 show a composition bias toward low complexity; the sequence is TSASTPPASA. A Phosphotyrosine modification is found at Tyr-434. Over residues 439–458 the composition is skewed to acidic residues; that stretch reads DTEEEEDEDVDSEDKEDDSE. The span at 466-477 shows a compositional bias: basic and acidic residues; the sequence is SDPHPSHPDQRA. An interaction with KMT2A/MLL1 region spans residues 483–555; sequence GYRPGKETEE…DPETPLKARK (73 aa). Residues 490–501 show a composition bias toward acidic residues; that stretch reads TEEEEAAEDWGE. Tyr-512 is modified (phosphotyrosine). 2 disordered regions span residues 534 to 554 and 625 to 674; these read RLKR…LKAR and APIP…GRRG. An interaction with SMARCB1 region spans residues 536 to 583; that stretch reads KRPETPTHDPDPETPLKARKVRFSEKVTVHFLAVWAGPAQAARQGPWE. Over residues 537–554 the composition is skewed to basic and acidic residues; sequence RPETPTHDPDPETPLKAR. A compositionally biased stretch (low complexity) spans 630–666; sequence LTQTLPSSSVPSSPVQTTPLSQAVATPSRSSAAAAAA.

It belongs to the PPP1R15 family. As to quaternary structure, interacts with PPP1CA. Interacts with EIF2S1. Interacts with PCNA. Interacts with LYN and KMT2A/MLL1. Interacts with PPP1R1A and SMARCB1. Interacts with SMAD7. Interacts with BAG1. Interacts with NOX4. (Microbial infection) Interacts with enterovirus 71/EV71 non-structural protein precursor 3CD; this interaction promotes EV71 replication. Post-translationally, phosphorylated at multiple Ser/Thr residues. Phosphorylated on tyrosine by LYN; which impairs its antiproliferative activity. Phosphorylation at Tyr-262 enhances proteasomal degradation, this position is dephosphorylated by PTPN2. Polyubiquitinated. Exhibits a rapid proteasomal degradation with a half-life under 1 hour, ubiquitination depends on endoplasmic reticulum association.

It is found in the endoplasmic reticulum membrane. The protein localises to the mitochondrion outer membrane. Its function is as follows. Recruits the serine/threonine-protein phosphatase PPP1CA to prevents excessive phosphorylation of the translation initiation factor eIF-2A/EIF2S1, thereby reversing the shut-off of protein synthesis initiated by stress-inducible kinases and facilitating recovery of cells from stress. Down-regulates the TGF-beta signaling pathway by promoting dephosphorylation of TGFB1 by PP1. May promote apoptosis by inducing p53/TP53 phosphorylation on 'Ser-15'. Plays an essential role in autophagy by tuning translation during starvation, thus enabling lysosomal biogenesis and a sustained autophagic flux. Also acts a viral restriction factor by attenuating HIV-1 replication. Mechanistically, mediates the inhibition of HIV-1 TAR RNA-mediated translation. Functionally, (Microbial infection) Promotes enterovirus 71 replication by mediating the internal ribosome entry site (IRES) activity of viral 5'-UTR. This chain is Protein phosphatase 1 regulatory subunit 15A (PPP1R15A), found in Homo sapiens (Human).